The chain runs to 530 residues: Autoinducer-2 kinase (530 aa).

It belongs to the FGGY kinase family.

It is found in the cytoplasm. The catalysed reaction is (S)-4,5-dihydroxypentane-2,3-dione + ATP = (2S)-2-hydroxy-3,4-dioxopentyl phosphate + ADP + H(+). Its function is as follows. Catalyzes the phosphorylation of autoinducer-2 (AI-2) to phospho-AI-2, which subsequently inactivates the transcriptional regulator LsrR and leads to the transcription of the lsr operon. Phosphorylates the ring-open form of (S)-4,5-dihydroxypentane-2,3-dione (DPD), which is the precursor to all AI-2 signaling molecules, at the C5 position. In Yersinia pseudotuberculosis serotype O:3 (strain YPIII), this protein is Autoinducer-2 kinase.